A 447-amino-acid polypeptide reads, in one-letter code: Acid phosphatase (447 aa).

The signal sequence occupies residues 1–17 (MKPSVATLLATVSLVYA). N-linked (GlcNAc...) asparagine glycans are attached at residues Asn119, Asn150, Asn177, Asn186, and Asn208. The Proton donor role is filled by Asp215. 7 N-linked (GlcNAc...) asparagine glycosylation sites follow: Asn217, Asn234, Asn240, Asn315, Asn332, Asn382, and Asn405. Ser419 is lipidated: GPI-like-anchor amidated serine. A propeptide spans 420-447 (ASSNAAVSAVAPAAGVSGLLLGLALNLL) (removed in mature form).

In terms of processing, the GPI-like anchor contains a phosphoceramide lipid group. The anchor position has not been determined.

The protein resides in the cell membrane. The enzyme catalyses a phosphate monoester + H2O = an alcohol + phosphate. With respect to regulation, inhibited by NaF, molybdate and vanadate. In terms of biological role, has both phosphomonoesterase and phosphodiesterase activity. Cleaves a broad range of phosphate esters. In Aspergillus fumigatus (strain ATCC MYA-4609 / CBS 101355 / FGSC A1100 / Af293) (Neosartorya fumigata), this protein is Acid phosphatase (phoA).